The sequence spans 513 residues: MKMASFLAFLLLNFRVCLLLLQLLMPHSAQFSVLGPSGPILAMVGEDADLPCHLFPTMSAETMELKWVSSSLRQVVNVYADGKEVEDRQSAPYRGRTSILRDGITAGKAALRIHNVTASDSGKYLCYFQDGDFYEKALVELKVAALGSDLHVDVKGYKDGGIHLECRSTGWYPQPQIQWSNNKGENIPTVEAPVVADGVGLYAVAASVIMRGSSGEGVSCTIRSSLLGLEKTASISIADPFFRSAQRWIAALAGTLPVLLLLLGGAGYFLWQQQEEKKTQFRKKKREQELREMAWSTMKQEQSTRVKLLEELRWRSIQYASRGERHSAYNEWKKALFKPADVILDPKTANPILLVSEDQRSVQRAKEPQDLPDNPERFNWHYCVLGCESFISGRHYWEVEVGDRKEWHIGVCSKNVQRKGWVKMTPENGFWTMGLTDGNKYRTLTEPRTNLKLPKPPKKVGVFLDYETGDISFYNAVDGSHIHTFLDVSFSEALYPVFRILTLEPTALTICPA.

A signal peptide spans 1–29 (MKMASFLAFLLLNFRVCLLLLQLLMPHSA). Ig-like V-type domains are found at residues 30–139 (QFSV…KALV) and 145–236 (ALGS…ASIS). Over 30–254 (QFSVLGPSGP…AQRWIAALAG (225 aa)) the chain is Extracellular. Intrachain disulfides connect Cys52-Cys126 and Cys166-Cys220. N-linked (GlcNAc...) asparagine glycosylation occurs at Asn115. A helical membrane pass occupies residues 255-271 (TLPVLLLLLGGAGYFLW). At 272–513 (QQQEEKKTQF…EPTALTICPA (242 aa)) the chain is on the cytoplasmic side. Positions 322–513 (RGERHSAYNE…EPTALTICPA (192 aa)) constitute a B30.2/SPRY domain.

It belongs to the immunoglobulin superfamily. BTN/MOG family. As to quaternary structure, homodimer. Post-translationally, N-glycosylated. As to expression, detected on T-cells, natural killer cells, dendritic cells and macrophages (at protein level). Ubiquitous. Highly expressed in heart, pancreas and lung, Moderately expressed in placenta, liver and muscle.

It is found in the cell membrane. Its function is as follows. Plays a role in T-cell activation and in the adaptive immune response. Regulates the proliferation of activated T-cells. Regulates the release of cytokines and IFNG by activated T-cells. Mediates the response of T-cells toward infected and transformed cells that are characterized by high levels of phosphorylated metabolites, such as isopentenyl pyrophosphate. The protein is Butyrophilin subfamily 3 member A1 (BTN3A1) of Homo sapiens (Human).